The chain runs to 378 residues: Inner membrane protein YibH (378 aa).

Over 1–3 the chain is Periplasmic; it reads MDL. The helical transmembrane segment at 4-24 threads the bilayer; it reads LIVLTYVALAWAVFKIFRIPV. The Cytoplasmic segment spans residues 25 to 26; it reads NQ. The helical transmembrane segment at 27–47 threads the bilayer; sequence WTLATAALGGVFLVSGLILLM. Residues 48–54 are Periplasmic-facing; the sequence is NYNHPYT. A helical transmembrane segment spans residues 55-75; it reads FTAQKAVIAIPITPQVTGIVT. Residues 76–232 are Cytoplasmic-facing; the sequence is EVTDKNNQLI…RAPSNGYVTQ (157 aa). A helical transmembrane segment spans residues 233-253; it reads VLIRPGTYAAALPLRPVMVFI. Topologically, residues 254 to 280 are periplasmic; that stretch reads PEQKRQIVAQFRQNSLLRLKPGDDAEV. The chain crosses the membrane as a helical span at residues 281 to 301; sequence VFNALPGQVFHGKLTSILPVV. Residues 302–309 lie on the Cytoplasmic side of the membrane; the sequence is PGGSYQAQ. Residues 310–330 form a helical membrane-spanning segment; that stretch reads GVLQSLTVVPGTDGVLGTIEL. Residues 331–378 lie on the Periplasmic side of the membrane; sequence DPNDDIDALPDGIYAQVAVYSDHFSHVSVMRKVLLRMTSWMHYLYLDH.

Belongs to the membrane fusion protein (MFP) (TC 8.A.1) family.

The protein localises to the cell inner membrane. The protein is Inner membrane protein YibH (yibH) of Escherichia coli O157:H7.